We begin with the raw amino-acid sequence, 195 residues long: Flavin-dependent monooxygenase, reductase subunit HsaB (195 aa).

Residues 42–46, 48–49, 63–65, 69–70, and 95–96 each bind FAD; these read PVGFA, QS, CPT, RS, and RF. Position 160-163 (160-163) interacts with NAD(+); sequence FYRG.

It belongs to the non-flavoprotein flavin reductase family. HsaAB monooxygenase consists of an oxygenase component HsaA and a reductase component HsaB.

The catalysed reaction is a reduced flavin + NAD(+) = an oxidized flavin + NADH + 2 H(+). It functions in the pathway lipid metabolism; steroid biosynthesis. In terms of biological role, catalyzes the reduction of free flavins (FMN or FAD) by NADH. Subsequently, the reduced flavins diffuse to the HsaA oxygenase subunit. The sequence is that of Flavin-dependent monooxygenase, reductase subunit HsaB (hsaB) from Rhodococcus jostii (strain RHA1).